Consider the following 209-residue polypeptide: Large ribosomal subunit protein eL13 (209 aa).

This sequence belongs to the eukaryotic ribosomal protein eL13 family. In terms of assembly, component of the 60S large ribosomal subunit (LSU).

The protein localises to the cytoplasm. Its function is as follows. Component of the ribosome, a large ribonucleoprotein complex responsible for the synthesis of proteins in the cell. The small ribosomal subunit (SSU) binds messenger RNAs (mRNAs) and translates the encoded message by selecting cognate aminoacyl-transfer RNA (tRNA) molecules. The large subunit (LSU) contains the ribosomal catalytic site termed the peptidyl transferase center (PTC), which catalyzes the formation of peptide bonds, thereby polymerizing the amino acids delivered by tRNAs into a polypeptide chain. The nascent polypeptides leave the ribosome through a tunnel in the LSU and interact with protein factors that function in enzymatic processing, targeting, and the membrane insertion of nascent chains at the exit of the ribosomal tunnel. As part of the LSU, it is probably required for its formation and the maturation of rRNAs. This chain is Large ribosomal subunit protein eL13 (rpl13), found in Dictyostelium discoideum (Social amoeba).